Here is a 442-residue protein sequence, read N- to C-terminus: MAATDLERFSNAEAEPRSLSLGGHVGFDSLPDQLVSKSVTQGFSFNILCVGETGIGKSTLMNTLFNTTFETEEASHHEACVRLRPQTYDLQESNVQLKLTIVDAVGFGDQINKDESYRPIVDYIDAQFENYLQEELKIRRSLFDYHDTRIHVCLYFITPTGHSLKSLDLVTMKKLDSKVNIIPIIAKADTISKSELHKFKIKIMGELVSNGVQIYQFPTDDEAVAEINAVMNAHLPFAVVGSTEEVKVGNKLVRARQYPWGVVQVENENHCDFVKLREMLIRVNMEDLREQTHSRHYELYRRCKLEEMGFQDSDGDSQPFSLQETYEAKRKEFLSELQRKEEEMRQMFVNKVKETELELKEKERELHEKFEHLKRVHQEEKRKVEEKRRELEEETNAFNRRKAAVEALQSQALHATSQQPLRKDKDKKKASGWSSIYSVTIP.

Alanine 2 carries the N-acetylalanine modification. Serine 10 is subject to Phosphoserine. In terms of domain architecture, Septin-type G spans glutamine 41–glutamate 307. The segment at glycine 51 to serine 58 is G1 motif. GTP contacts are provided by residues glycine 51–serine 58, glycine 106, lysine 187–glutamate 195, glycine 241, and arginine 256. A G3 motif region spans residues aspartate 103–glycine 106. Residues alanine 186–aspartate 189 are G4 motif. Residues leucine 322 to serine 410 are a coiled coil. Basic and acidic residues predominate over residues histidine 377–leucine 391. Residues histidine 377–proline 442 are disordered. 2 stretches are compositionally biased toward polar residues: residues leucine 408–proline 420 and glycine 432–proline 442.

It belongs to the TRAFAC class TrmE-Era-EngA-EngB-Septin-like GTPase superfamily. Septin GTPase family. As to quaternary structure, septins polymerize into heterooligomeric protein complexes that form filaments, and can associate with cellular membranes, actin filaments and microtubules. GTPase activity is required for filament formation. Interacts with CDK14, SEPTIN4, SEPTIN5 and SEPTIN7. Interacts with VAMP2; the interaction inhibits interaction of VAMP2 with SYP. Interacts with STX1A.

The protein localises to the cytoplasm. It localises to the cytoskeleton. Its subcellular location is the synapse. The protein resides in the cell projection. It is found in the axon. The protein localises to the cytoplasmic vesicle. It localises to the secretory vesicle. Its subcellular location is the synaptic vesicle membrane. The protein resides in the presynapse. In terms of biological role, filament-forming cytoskeletal GTPase. May play a role in platelet secretion. Seems to participate in the process of SNARE complex formation in synaptic vesicles. The sequence is that of Septin-8 from Callithrix jacchus (White-tufted-ear marmoset).